Here is a 770-residue protein sequence, read N- to C-terminus: Pyrophosphate-energized vacuolar membrane proton pump 1 (770 aa).

At 1–9 (MVAPALLPE) the chain is on the intravacuolar side. The chain crosses the membrane as a helical span at residues 10–36 (LWTEILVPICAVIGIAFSLFQWYVVSR). The Cytoplasmic segment spans residues 37–88 (VKLTSDLGASSSGGANNGKNGYGDYLIEEEEGVNDQSVVAKCAEIQTAISEG). A helical membrane pass occupies residues 89–118 (ATSFLFTEYKYVGVFMIFFAAVIFVFLGSV). Residues 119-139 (EGFSTDNKPCTYDTTRTCKPA) are Intravacuolar-facing. Cys-128 and Cys-136 are joined by a disulfide. A helical transmembrane segment spans residues 140-167 (LATAAFSTIAFVLGAVTSVLSGFLGMKI). The Cytoplasmic segment spans residues 168–190 (ATYANARTTLEARKGVGKAFIVA). The helical transmembrane segment at 191 to 220 (FRSGAVMGFLLAASGLLVLYITINVFKIYY) threads the bilayer. Topologically, residues 221-223 (GDD) are intravacuolar. Residues 224 to 252 (WEGLFEAITGYGLGGSSMALFGRVGGGIY) traverse the membrane as a helical segment. At 253–290 (TKAADVGADLVGKIERNIPEDDPRNPAVIADNVGDNVG) the chain is on the cytoplasmic side. Lys-254 contacts substrate. Residues Asp-257, Asp-261, and Asp-287 each contribute to the Mg(2+) site. The helical transmembrane segment at 291–316 (DIAGMGSDLFGSYAEASCAALVVASI) threads the bilayer. Residues 317–324 (SSFGINHD) lie on the Intravacuolar side of the membrane. The chain crosses the membrane as a helical span at residues 325–350 (FTAMCYPLLISSMGILVCLITTLFAT). The Cytoplasmic segment spans residues 351–358 (DFFEIKLV). Residues 359–386 (KEIEPALKNQLIISTVIMTVGIAIVSWV) form a helical membrane-spanning segment. Topologically, residues 387 to 405 (GLPTSFTIFNFGTQKVVKN) are intravacuolar. A helical membrane pass occupies residues 406–429 (WQLFLCVCVGLWAGLIIGFVTEYY). The Cytoplasmic segment spans residues 430 to 451 (TSNAYSPVQDVADSCRTGAATN). A helical membrane pass occupies residues 452-476 (VIFGLALGYKSVIIPIFAIAISIFV). The Intravacuolar portion of the chain corresponds to 477–482 (SFSFAA). A helical transmembrane segment spans residues 483 to 509 (MYGVAVAALGMLSTIATGLAIDAYGPI). The Cytoplasmic segment spans residues 510–538 (SDNAGGIAEMAGMSHRIRERTDALDAAGN). Mg(2+) contacts are provided by Asp-511 and Asn-538. A helical membrane pass occupies residues 539–567 (TTAAIGKGFAIGSAALVSLALFGAFVSRA). Over 568 to 577 (GIHTVDVLTP) the chain is Intravacuolar. A helical membrane pass occupies residues 578–606 (KVIIGLLVGAMLPYWFSAMTMKSVGSAAL). The Cytoplasmic segment spans residues 607-635 (KMVEEVRRQFNTIPGLMEGTAKPDYATCV). Residues 636-664 (KISTDASIKEMIPPGCLVMLTPLIVGFFF) form a helical membrane-spanning segment. A topological domain (intravacuolar) is located at residue Gly-665. Residues 666–693 (VETLSGVLAGSLVSGVQIAISASNTGGA) traverse the membrane as a helical segment. Topologically, residues 694 to 736 (WDNAKKYIEAGVSEHAKSLGPKGSEPHKAAVIGDTIGDPLKDT) are cytoplasmic. Residues Asp-695 and Asp-731 each contribute to the Mg(2+) site. Substrate is bound at residue Lys-734. Residues 737–762 (SGPSLNILIKLMAVESLVFAPFFATH) form a helical membrane-spanning segment. The Intravacuolar segment spans residues 763-770 (GGILFKYF).

It belongs to the H(+)-translocating pyrophosphatase (TC 3.A.10) family. K(+)-stimulated subfamily. In terms of assembly, monomer. Ubiquitous (at protein level). Mostly expressed in vascular tissues, meristems and root pericycle.

Its subcellular location is the vacuole membrane. The protein resides in the endosome membrane. The protein localises to the cell membrane. It catalyses the reaction diphosphate + H2O + H(+)(in) = 2 phosphate + 2 H(+)(out). With respect to regulation, activated by K(+) and Mg(2+). Inhibited by Ca(2+), N,N'-dicyclohexylcarbodiimide (DCCD), N-ethylmaleimide (NEM) and aminomethylenediphosphonate (AMDP), and, to a lower extent, by fluoride (KF). Contributes to the transtonoplast (from cytosol to vacuole lumen) H(+)-electrochemical potential difference. It establishes a proton gradient of similar and often greater magnitude than the H(+)-ATPase on the same membrane. In addition, facilitates auxin transport by modulating apoplastic pH and regulates auxin-mediated developmental processes. Confers tolerance to NaCl and to drought by increasing ion retention. In Arabidopsis thaliana (Mouse-ear cress), this protein is Pyrophosphate-energized vacuolar membrane proton pump 1 (AVP1).